A 304-amino-acid chain; its full sequence is Ribonuclease Z (304 aa).

Zn(2+)-binding residues include histidine 63, histidine 65, aspartate 67, histidine 68, histidine 143, aspartate 213, and histidine 271. Aspartate 67 (proton acceptor) is an active-site residue.

It belongs to the RNase Z family. Homodimer. Requires Zn(2+) as cofactor.

It catalyses the reaction Endonucleolytic cleavage of RNA, removing extra 3' nucleotides from tRNA precursor, generating 3' termini of tRNAs. A 3'-hydroxy group is left at the tRNA terminus and a 5'-phosphoryl group is left at the trailer molecule.. Functionally, zinc phosphodiesterase, which displays some tRNA 3'-processing endonuclease activity. Probably involved in tRNA maturation, by removing a 3'-trailer from precursor tRNA. In Bacteroides fragilis (strain YCH46), this protein is Ribonuclease Z.